A 1169-amino-acid chain; its full sequence is Chromosome partition protein Smc (1169 aa).

Position 32 to 39 (32 to 39) interacts with ATP; it reads PNGCGKSN. 2 coiled-coil regions span residues 170-265 and 307-481; these read ISKY…TGEE and IRHT…ERLN. The 96-residue stretch at 525–620 folds into the SMC hinge domain; it reads DRLGEKIEVA…CASDPAEAAE (96 aa). Coiled-coil stretches lie at residues 656-914 and 985-1014; these read ALAR…MKLA and RYLEEQDRDLTESLATLEQAIEKIDRECRA.

Belongs to the SMC family. As to quaternary structure, homodimer.

The protein localises to the cytoplasm. In terms of biological role, required for chromosome condensation and partitioning. The protein is Chromosome partition protein Smc of Methylococcus capsulatus (strain ATCC 33009 / NCIMB 11132 / Bath).